Here is a 597-residue protein sequence, read N- to C-terminus: Elongation factor 4 (597 aa).

The tr-type G domain maps to 2–184 (KHIRNFSIIA…NIVTAIPPPE (183 aa)). GTP is bound by residues 14–19 (DHGKST) and 131–134 (NKID).

This sequence belongs to the TRAFAC class translation factor GTPase superfamily. Classic translation factor GTPase family. LepA subfamily.

It localises to the cell inner membrane. It catalyses the reaction GTP + H2O = GDP + phosphate + H(+). In terms of biological role, required for accurate and efficient protein synthesis under certain stress conditions. May act as a fidelity factor of the translation reaction, by catalyzing a one-codon backward translocation of tRNAs on improperly translocated ribosomes. Back-translocation proceeds from a post-translocation (POST) complex to a pre-translocation (PRE) complex, thus giving elongation factor G a second chance to translocate the tRNAs correctly. Binds to ribosomes in a GTP-dependent manner. The protein is Elongation factor 4 of Vibrio atlanticus (strain LGP32) (Vibrio splendidus (strain Mel32)).